The primary structure comprises 870 residues: Translation initiation factor IF-2 (870 aa).

The interval 49 to 284 (SFQNSAPAEK…TKRKERPLPE (236 aa)) is disordered. 2 stretches are compositionally biased toward basic and acidic residues: residues 70-81 (RKNEKKQEDNAG) and 94-109 (QNND…RDHS). Over residues 116 to 127 (KPKAAALLQQFK) the composition is skewed to low complexity. Basic and acidic residues-rich tracts occupy residues 144–159 (AKKE…KKEQ) and 168–183 (NKES…EKKV). The segment covering 254 to 279 (RKRRKNKNKKRKQEQKPKKQITKRKE) has biased composition (basic residues). Positions 371 to 540 (KRPPVVTIMG…LLQADMMELK (170 aa)) constitute a tr-type G domain. Residues 380–387 (GHVDHGKT) form a G1 region. 380-387 (GHVDHGKT) is a GTP binding site. Positions 405–409 (GITQK) are G2. A G3 region spans residues 426-429 (DTPG). Residues 426–430 (DTPGH) and 480–483 (NKMD) contribute to the GTP site. Residues 480 to 483 (NKMD) form a G4 region. The interval 516–518 (SAR) is G5.

This sequence belongs to the TRAFAC class translation factor GTPase superfamily. Classic translation factor GTPase family. IF-2 subfamily.

Its subcellular location is the cytoplasm. One of the essential components for the initiation of protein synthesis. Protects formylmethionyl-tRNA from spontaneous hydrolysis and promotes its binding to the 30S ribosomal subunits. Also involved in the hydrolysis of GTP during the formation of the 70S ribosomal complex. The chain is Translation initiation factor IF-2 from Lactobacillus helveticus (strain DPC 4571).